A 351-amino-acid chain; its full sequence is Methionine import ATP-binding protein MetN (351 aa).

The 246-residue stretch at 4–249 folds into the ABC transporter domain; the sequence is VQLDHVSVTF…PKAELTQKFV (246 aa). 41 to 48 provides a ligand contact to ATP; it reads GFSGAGKS.

This sequence belongs to the ABC transporter superfamily. Methionine importer (TC 3.A.1.24) family. In terms of assembly, the complex is composed of two ATP-binding proteins (MetN), two transmembrane proteins (MetI) and a solute-binding protein (MetQ).

The protein resides in the cell membrane. It carries out the reaction L-methionine(out) + ATP + H2O = L-methionine(in) + ADP + phosphate + H(+). The catalysed reaction is D-methionine(out) + ATP + H2O = D-methionine(in) + ADP + phosphate + H(+). Its function is as follows. Part of the ABC transporter complex MetNIQ involved in methionine import. Responsible for energy coupling to the transport system. This chain is Methionine import ATP-binding protein MetN, found in Lactobacillus delbrueckii subsp. bulgaricus (strain ATCC BAA-365 / Lb-18).